The primary structure comprises 298 residues: Inosose dehydratase (298 aa).

This sequence belongs to the IolE/MocC family. The cofactor is glutathione. Co(2+) serves as cofactor. It depends on Mn(2+) as a cofactor.

It catalyses the reaction scyllo-inosose = 3D-3,5/4-trihydroxycyclohexane-1,2-dione + H2O. The protein operates within polyol metabolism; myo-inositol degradation into acetyl-CoA; acetyl-CoA from myo-inositol: step 2/7. Functionally, catalyzes the dehydration of inosose (2-keto-myo-inositol, 2KMI or 2,4,6/3,5-pentahydroxycyclohexanone) to 3D-(3,5/4)-trihydroxycyclohexane-1,2-dione (D-2,3-diketo-4-deoxy-epi-inositol). The chain is Inosose dehydratase from Geobacillus thermodenitrificans (strain NG80-2).